Consider the following 410-residue polypeptide: Polyprenol-phosphate-mannose-dependent alpha-(1-2)-phosphatidylinositol pentamannoside mannosyltransferase (410 aa).

A run of 10 helical transmembrane segments spans residues 31–51, 96–116, 160–180, 188–208, 214–234, 276–296, 306–326, 328–348, 351–371, and 384–404; these read LAPM…YLVP, FAAI…AFIW, TFDY…AVST, LLVG…LYFL, AAVA…WLVV, GFGP…LLAW, LGGI…SWTH, WVWL…ALRG, ILGW…LSFA, and LAWA…WIAF.

The protein belongs to the glycosyltransferase 87 family.

It is found in the cell membrane. Its pathway is phospholipid metabolism; phosphatidylinositol metabolism. Catalyzes the alpha-1,2 addition of a mannose residue from polyprenol-phosphate-mannose (PPM) to a monoacyl phosphatidylinositol tetramannoside (AcPIM4) to generate a monoacyl phosphatidylinositol pentamannoside (AcPIM5). This Mycolicibacterium smegmatis (strain ATCC 700084 / mc(2)155) (Mycobacterium smegmatis) protein is Polyprenol-phosphate-mannose-dependent alpha-(1-2)-phosphatidylinositol pentamannoside mannosyltransferase.